The sequence spans 547 residues: Sodium-coupled neutral amino acid transporter 4 (547 aa).

The interval 1 to 30 (MDPMELRNVNIEPDDESSSGESAPDSYIGI) is disordered. The Extracellular portion of the chain corresponds to 1-104 (MDPMELRNVN…GLSYAMANTG (104 aa)). Phosphoserine is present on Ser-49. The helical transmembrane segment at 105-125 (IILFIIMLLAVAILSLYSVHL) threads the bilayer. Residues 126–151 (LLKTAKEGGSLIYEKLGEKAFGWPGK) are Cytoplasmic-facing. A helical transmembrane segment spans residues 152–172 (IGAFVSITMQNIGAMSSYLFI). Residues 173–195 (IKYELPEVIRAFMGLEENTGEWY) are Extracellular-facing. A helical membrane pass occupies residues 196–216 (LNGNYLIIFVSVGIILPLSLL). Topologically, residues 217 to 220 (KNLG) are cytoplasmic. A helical transmembrane segment spans residues 221–241 (YLGYTSGFSLTCMVFFVSVVI). Topologically, residues 242 to 332 (YKKFQIPCPL…PKYFVFNSRT (91 aa)) are extracellular. A disulfide bond links Cys-249 and Cys-321. N-linked (GlcNAc...) asparagine glycosylation is found at Asn-260, Asn-264, and Asn-276. A helical transmembrane segment spans residues 333-353 (AYAIPILVFAFVCHPEVLPIY). Topologically, residues 354–369 (SELKDRSRRKMQTVSN) are cytoplasmic. A helical membrane pass occupies residues 370-390 (ISITGMLVMYLLAALFGYLTF). Residues 391-411 (YGEVEDELLHAYSKVYTLDIP) lie on the Extracellular side of the membrane. Residues 412-432 (LLMVRLAVLVAVTLTVPIVLF) traverse the membrane as a helical segment. Topologically, residues 433–453 (PIRTSVITLLFPKRPFSWIRH) are cytoplasmic. Residues 454–474 (FLIAAVLIALNNVLVILVPTI) form a helical membrane-spanning segment. Topologically, residues 475-476 (KY) are extracellular. Residues 477 to 497 (IFGFIGASSATMLIFILPAVF) traverse the membrane as a helical segment. Over 498–514 (YLKLVKKETFRSPQKVG) the chain is Cytoplasmic. The helical transmembrane segment at 515–535 (ALIFLVVGIFFMIGSMALIII) threads the bilayer. Topologically, residues 536-547 (DWIYDPPNSKHH) are extracellular.

Belongs to the amino acid/polyamine transporter 2 family. The disulfide bond plays an important role in substrate transport, but has no effect on trafficking to the cell surface. As to expression, expressed almost exclusively in embryonic and adult liver, and at lower levels in the kidney. Expressed at lower levels in adult muscle and pancreas. Detected in fetal blood vessels. Expressed in syncytiotrophoblas of placenta during first trimester and at term. Highly expressed in first trimester placenta compared to term placenta.

Its subcellular location is the cell membrane. It is found in the cell projection. The protein resides in the microvillus membrane. The enzyme catalyses L-methionine(in) + Na(+)(in) = L-methionine(out) + Na(+)(out). It catalyses the reaction L-asparagine(in) + Na(+)(in) = L-asparagine(out) + Na(+)(out). It carries out the reaction L-threonine(in) + Na(+)(in) = L-threonine(out) + Na(+)(out). The catalysed reaction is L-serine(in) + Na(+)(in) = L-serine(out) + Na(+)(out). The enzyme catalyses glycine(in) + Na(+)(in) = glycine(out) + Na(+)(out). It catalyses the reaction L-alanine(in) + Na(+)(in) = L-alanine(out) + Na(+)(out). It carries out the reaction L-glutamine(in) + Na(+)(in) = L-glutamine(out) + Na(+)(out). The catalysed reaction is L-histidine(in) + Na(+)(in) = L-histidine(out) + Na(+)(out). The enzyme catalyses L-cysteine(in) + Na(+)(in) = L-cysteine(out) + Na(+)(out). It catalyses the reaction L-proline(in) + Na(+)(in) = L-proline(out) + Na(+)(out). Symporter that cotransports neutral amino acids and sodium ions from the extraccellular to the intracellular side of the cell membrane. The transport is electrogenic, pH dependent and partially tolerates substitution of Na(+) by Li(+). Preferentially transports smaller amino acids, such as glycine, L-alanine, L-serine, L-asparagine and L-threonine, followed by L-cysteine, L-histidine, L-proline and L-glutamine and L-methionine. The polypeptide is Sodium-coupled neutral amino acid transporter 4 (Homo sapiens (Human)).